Reading from the N-terminus, the 438-residue chain is Glutamate-1-semialdehyde 2,1-aminomutase (438 aa).

N6-(pyridoxal phosphate)lysine is present on Lys274.

It belongs to the class-III pyridoxal-phosphate-dependent aminotransferase family. HemL subfamily. As to quaternary structure, homodimer. Pyridoxal 5'-phosphate serves as cofactor.

It is found in the cytoplasm. It carries out the reaction (S)-4-amino-5-oxopentanoate = 5-aminolevulinate. It functions in the pathway porphyrin-containing compound metabolism; protoporphyrin-IX biosynthesis; 5-aminolevulinate from L-glutamyl-tRNA(Glu): step 2/2. This Salinibacter ruber (strain DSM 13855 / M31) protein is Glutamate-1-semialdehyde 2,1-aminomutase.